Reading from the N-terminus, the 309-residue chain is Olfactory receptor 5AK2 (309 aa).

Residues 1 to 25 (MTLGNSTEVTEFYLLGFGAQHEFWC) lie on the Extracellular side of the membrane. Residue N5 is glycosylated (N-linked (GlcNAc...) asparagine). The chain crosses the membrane as a helical span at residues 26-46 (ILFIVFLLIYVTSIMGNSGII). The Cytoplasmic portion of the chain corresponds to 47 to 54 (LLINTDSR). Residues 55–75 (FQTLTYFFLQHLAFVDICYTS) traverse the membrane as a helical segment. At 76 to 99 (AITPKMLQSFTEEKNLMLFQGCVI) the chain is on the extracellular side. A disulfide bridge links C97 with C189. The helical transmembrane segment at 100-120 (QFLVYATFATSDCYLLAMMAV) threads the bilayer. At 121–133 (DPYVAICKPLHYT) the chain is on the cytoplasmic side. The helical transmembrane segment at 134-154 (VIMSRTVCIRLVAGSYIMGSI) threads the bilayer. Residue N155 is glycosylated (N-linked (GlcNAc...) asparagine). The Extracellular portion of the chain corresponds to 155–196 (NASVQTGFTCSLSFCKSNSINHFFCDVPPILALSCSNVDINI). A helical transmembrane segment spans residues 197–217 (MLLVVFVGSNLIFTGLVVIFS). Over 218–237 (YIYIMATILKMSSSAGRKKS) the chain is Cytoplasmic. A helical membrane pass occupies residues 238–258 (FSTCASHLTAVTIFYGTLSYM). The Extracellular segment spans residues 259 to 271 (YLQSHSNNSQENM). N265 is a glycosylation site (N-linked (GlcNAc...) asparagine). Residues 272-292 (KVAFIFYGTVIPMLNPLIYSL) form a helical membrane-spanning segment. At 293–309 (RNKEVKEALKVIGKKLF) the chain is on the cytoplasmic side.

Belongs to the G-protein coupled receptor 1 family.

Its subcellular location is the cell membrane. In terms of biological role, odorant receptor. This Homo sapiens (Human) protein is Olfactory receptor 5AK2 (OR5AK2).